Here is a 185-residue protein sequence, read N- to C-terminus: GTP cyclohydrolase 1 (185 aa).

Zn(2+) contacts are provided by Cys76, His79, and Cys147.

This sequence belongs to the GTP cyclohydrolase I family. In terms of assembly, toroid-shaped homodecamer, composed of two pentamers of five dimers.

The catalysed reaction is GTP + H2O = 7,8-dihydroneopterin 3'-triphosphate + formate + H(+). It functions in the pathway cofactor biosynthesis; 7,8-dihydroneopterin triphosphate biosynthesis; 7,8-dihydroneopterin triphosphate from GTP: step 1/1. The polypeptide is GTP cyclohydrolase 1 (Clostridium perfringens (strain 13 / Type A)).